A 435-amino-acid chain; its full sequence is Monodehydroascorbate reductase 3, cytosolic (435 aa).

FAD-binding positions include 14–17 (GGVA), Glu41, Arg48, Lys53, Ile96, and 147–148 (RE). NAD(+)-binding positions include 172 to 178 (GGYIGLE), Glu196, Arg202, and Gly261. Residue 174–178 (YIGLE) coordinates NADP(+). NADP(+)-binding residues include Arg202 and Gly261. Asp298 contributes to the FAD binding site. 314–315 (EH) contacts NAD(+). 314-315 (EH) lines the NADP(+) pocket. Val316 serves as a coordination point for FAD. L-ascorbate is bound at residue Arg320. Residue Tyr349 participates in FAD binding. Residue Tyr349 participates in NAD(+) binding. Tyr349 provides a ligand contact to NADP(+). Arg351 contacts L-ascorbate.

The protein belongs to the FAD-dependent oxidoreductase family. FAD serves as cofactor.

It localises to the cytoplasm. It carries out the reaction 2 monodehydro-L-ascorbate radical + NADH + H(+) = 2 L-ascorbate + NAD(+). Its function is as follows. Catalyzes the conversion of monodehydroascorbate to ascorbate, oxidizing NADH in the process. Ascorbate is a major antioxidant against reactive oxygen species (ROS) and nitric oxide (NO). Can use NADPH as electron donor, but possesses lower activity compared to NADH as electron donor. This is Monodehydroascorbate reductase 3, cytosolic from Oryza sativa subsp. japonica (Rice).